Reading from the N-terminus, the 359-residue chain is Protein disulfide-isomerase C17H9.14c (359 aa).

The N-terminal stretch at 1 to 19 (MRLPLLSFVIFALFALVFA) is a signal peptide. Thioredoxin domains follow at residues 20-130 (SGVV…EKTG) and 134-250 (RKIV…KKSG). Residues C51 and C54 each act as nucleophile in the active site. 2 disulfides stabilise this stretch: C51/C54 and C170/C173.

Belongs to the protein disulfide isomerase family.

It catalyses the reaction Catalyzes the rearrangement of -S-S- bonds in proteins.. Functionally, participates in the folding of proteins containing disulfide bonds, may be involved in glycosylation, prolyl hydroxylation and triglyceride transfer. In Schizosaccharomyces pombe (strain 972 / ATCC 24843) (Fission yeast), this protein is Protein disulfide-isomerase C17H9.14c.